We begin with the raw amino-acid sequence, 294 residues long: Cytidine deaminase (294 aa).

CMP/dCMP-type deaminase domains lie at 48–168 (DEDA…FGPK) and 186–294 (LTGD…VLLA). 89-91 (NME) is a binding site for substrate. Residue His-102 participates in Zn(2+) binding. Glu-104 acts as the Proton donor in catalysis. Zn(2+) contacts are provided by Cys-129 and Cys-132.

It belongs to the cytidine and deoxycytidylate deaminase family. Homodimer. Requires Zn(2+) as cofactor.

It carries out the reaction cytidine + H2O + H(+) = uridine + NH4(+). The catalysed reaction is 2'-deoxycytidine + H2O + H(+) = 2'-deoxyuridine + NH4(+). Its function is as follows. This enzyme scavenges exogenous and endogenous cytidine and 2'-deoxycytidine for UMP synthesis. The protein is Cytidine deaminase of Escherichia coli O17:K52:H18 (strain UMN026 / ExPEC).